The following is a 270-amino-acid chain: tRNA pseudouridine synthase A (270 aa).

Residue Asp-55 is the Nucleophile of the active site. Position 110 (Tyr-110) interacts with substrate.

The protein belongs to the tRNA pseudouridine synthase TruA family.

The enzyme catalyses uridine(38/39/40) in tRNA = pseudouridine(38/39/40) in tRNA. In terms of biological role, formation of pseudouridine at positions 38, 39 and 40 in the anticodon stem and loop of transfer RNAs. This chain is tRNA pseudouridine synthase A, found in Methanoculleus marisnigri (strain ATCC 35101 / DSM 1498 / JR1).